Consider the following 298-residue polypeptide: Lipoyl synthase (298 aa).

[4Fe-4S] cluster contacts are provided by cysteine 40, cysteine 45, cysteine 51, cysteine 67, cysteine 71, cysteine 74, and serine 280. The 217-residue stretch at 53–269 (AVRRTATFMI…KEIALSKGFS (217 aa)) folds into the Radical SAM core domain.

The protein belongs to the radical SAM superfamily. Lipoyl synthase family. [4Fe-4S] cluster is required as a cofactor.

Its subcellular location is the cytoplasm. The catalysed reaction is [[Fe-S] cluster scaffold protein carrying a second [4Fe-4S](2+) cluster] + N(6)-octanoyl-L-lysyl-[protein] + 2 oxidized [2Fe-2S]-[ferredoxin] + 2 S-adenosyl-L-methionine + 4 H(+) = [[Fe-S] cluster scaffold protein] + N(6)-[(R)-dihydrolipoyl]-L-lysyl-[protein] + 4 Fe(3+) + 2 hydrogen sulfide + 2 5'-deoxyadenosine + 2 L-methionine + 2 reduced [2Fe-2S]-[ferredoxin]. Its pathway is protein modification; protein lipoylation via endogenous pathway; protein N(6)-(lipoyl)lysine from octanoyl-[acyl-carrier-protein]. Catalyzes the radical-mediated insertion of two sulfur atoms into the C-6 and C-8 positions of the octanoyl moiety bound to the lipoyl domains of lipoate-dependent enzymes, thereby converting the octanoylated domains into lipoylated derivatives. The protein is Lipoyl synthase of Geobacillus thermodenitrificans (strain NG80-2).